The chain runs to 108 residues: Thiosulfate sulfurtransferase GlpE (108 aa).

The Rhodanese domain maps to 17 to 105 (HQGAAVLVDI…WHRRFPADVA (89 aa)). Catalysis depends on C65, which acts as the Cysteine persulfide intermediate.

Belongs to the GlpE family.

The protein localises to the cytoplasm. It carries out the reaction thiosulfate + hydrogen cyanide = thiocyanate + sulfite + 2 H(+). The catalysed reaction is thiosulfate + [thioredoxin]-dithiol = [thioredoxin]-disulfide + hydrogen sulfide + sulfite + 2 H(+). Transferase that catalyzes the transfer of sulfur from thiosulfate to thiophilic acceptors such as cyanide or dithiols. May function in a CysM-independent thiosulfate assimilation pathway by catalyzing the conversion of thiosulfate to sulfite, which can then be used for L-cysteine biosynthesis. This chain is Thiosulfate sulfurtransferase GlpE, found in Salmonella choleraesuis (strain SC-B67).